The chain runs to 20 residues: SIFAFQDESPSAIAQAKLFK.

It belongs to the BetVI family.

The polypeptide is Protein PR-L5 (Lupinus luteus (European yellow lupine)).